A 474-amino-acid chain; its full sequence is MVMEEGRSIEEGLLQLKNKNDDSECRITACVILSTFVAVCGSFSFGVATGYTSGAETGVMKDLDLSIAQFSAFGSFATLGAAIGALFCGNLAMVIGRRGTMWVSDFLCITGWLSIAFAKEVVLLNFGRIISGIGFGLTSYVVPVYIAEITPKHVRGTFTFSNQLLQNAGLAMIYFCGNFITWRTLALLGALPCFIQVIGLFFVPESPRWLAKVGSDKELENSLFRLRGRDADISREASEIQVMTKMVENDSKSSFSDLFQRKYRYTLVVGIGLMLIQQFSGSAAVISYASTIFRKAGFSVAIGTTMLGIFVIPKAMIGLILVDKWGRRPLLMTSAFGMSMTCMLLGVAFTLQKMQLLSELTPILSFICVMMYIATYAIGLGGLPWVIMSEIFPINIKVTAGSIVTLVSFSSSSIVTYAFNFLFEWSTQGTFFIFAGIGGAALLFIWLLVPETKGLSLEEIQVSLIHQPDERNQT.

Transmembrane regions (helical) follow at residues 27 to 47 (ITACVILSTFVAVCGSFSFGV), 76 to 96 (FATLGAAIGALFCGNLAMVIG), 106 to 126 (FLCITGWLSIAFAKEVVLLNF), 129 to 149 (IISGIGFGLTSYVVPVYIAEI), 159 to 180 (TFSNQLLQNAGLAMIYFCGNFI), 184 to 204 (TLALLGALPCFIQVIGLFFVP), 266 to 286 (TLVVGIGLMLIQQFSGSAAVI), 302 to 322 (IGTTMLGIFVIPKAMIGLILV), 329 to 349 (PLLMTSAFGMSMTCMLLGVAF), 363 to 383 (ILSFICVMMYIATYAIGLGGL), 403 to 423 (IVTLVSFSSSSIVTYAFNFLF), and 429 to 449 (GTFFIFAGIGGAALLFIWLLV).

Belongs to the major facilitator superfamily. Sugar transporter (TC 2.A.1.1) family. Expressed in young seedlings.

The protein localises to the membrane. Its function is as follows. Sugar transporter. The sequence is that of Sugar transporter ERD6-like 17 from Arabidopsis thaliana (Mouse-ear cress).